The sequence spans 489 residues: Protein P7 (489 aa).

2 RNA-binding regions span residues 129 to 251 and 321 to 351; these read TSLI…GRML and AGDY…FQVN.

It belongs to the phytoreovirus protein P7 family.

It is found in the virion. The protein resides in the host cytoplasm. Functionally, probable component of the transcriptional machinery present in the inner capsid. Displays dsRNA binding activity and may play an important role in the sorting of viral RNA and virion assembly. Together with the RNA-directed RNA polymerase P1 and capping enzyme P5, forms an transcriptional complex positioned near the channels situated at each of the five-fold vertices of the core. The chain is Protein P7 from Rice gall dwarf virus (RGDV).